Here is a 340-residue protein sequence, read N- to C-terminus: Glycerol-3-phosphate dehydrogenase [NAD(P)+] (340 aa).

NADPH-binding residues include Ser14, Trp15, and Lys109. Sn-glycerol 3-phosphate-binding residues include Lys109, Gly140, and Ser142. Ala144 contributes to the NADPH binding site. Lys195, Asp248, Ser258, Arg259, and Asn260 together coordinate sn-glycerol 3-phosphate. Residue Lys195 is the Proton acceptor of the active site. Arg259 contributes to the NADPH binding site. Residues Val283 and Glu285 each coordinate NADPH.

It belongs to the NAD-dependent glycerol-3-phosphate dehydrogenase family.

The protein localises to the cytoplasm. It catalyses the reaction sn-glycerol 3-phosphate + NAD(+) = dihydroxyacetone phosphate + NADH + H(+). The catalysed reaction is sn-glycerol 3-phosphate + NADP(+) = dihydroxyacetone phosphate + NADPH + H(+). Its pathway is membrane lipid metabolism; glycerophospholipid metabolism. In terms of biological role, catalyzes the reduction of the glycolytic intermediate dihydroxyacetone phosphate (DHAP) to sn-glycerol 3-phosphate (G3P), the key precursor for phospholipid synthesis. This chain is Glycerol-3-phosphate dehydrogenase [NAD(P)+], found in Syntrophobacter fumaroxidans (strain DSM 10017 / MPOB).